Consider the following 133-residue polypeptide: p53 and DNA damage-regulated protein 1 (133 aa).

Belongs to the prefoldin subunit beta family. Component of the PAQosome complex which is responsible for the biogenesis of several protein complexes and which consists of R2TP complex members RUVBL1, RUVBL2, RPAP3 and PIH1D1, URI complex members PFDN2, PFDN6, PDRG1, UXT and URI1 as well as ASDURF, POLR2E and DNAAF10/WDR92.

It is found in the cytoplasm. Functionally, may play a role in chaperone-mediated protein folding. The protein is p53 and DNA damage-regulated protein 1 (PDRG1) of Pongo abelii (Sumatran orangutan).